Consider the following 441-residue polypeptide: Probable membrane metalloprotease ARASP2, chloroplastic (441 aa).

The transit peptide at 1-84 directs the protein to the chloroplast; sequence MLLNISSSPI…DFGSLESVLE (84 aa). A Zn(2+)-binding site is contributed by histidine 96. Glutamate 97 is an active-site residue. Residue histidine 100 coordinates Zn(2+). Residues 171–191 traverse the membrane as a helical segment; that stretch reads VIVVSAGIVANVIFAYAIIFT. The region spanning 196 to 249 is the PDZ domain; sequence VGLPVQESFPGVLVPDVKSFSAASRDGLLPGDVILAVDGTELSNSGSDSVSKVV. 2 helical membrane passes run 373 to 393 and 407 to 427; these read LAVINLLPLPALDGGTLALIL and VEQGIMSSGIMLVLFLGLFLI.

This sequence belongs to the peptidase M50A family. Requires Zn(2+) as cofactor.

The protein localises to the plastid. Its subcellular location is the chloroplast inner membrane. In terms of biological role, metalloprotease essential for chloroplast and plant development. May be involved in regulated intramembrane proteolysis (RIP). This chain is Probable membrane metalloprotease ARASP2, chloroplastic, found in Arabidopsis thaliana (Mouse-ear cress).